A 33-amino-acid polypeptide reads, in one-letter code: Large ribosomal subunit protein uL24 (33 aa).

This sequence belongs to the universal ribosomal protein uL24 family. In terms of assembly, component of the large ribosomal subunit.

The protein resides in the cytoplasm. Component of the large ribosomal subunit. The ribosome is a large ribonucleoprotein complex responsible for the synthesis of proteins in the cell. This Xenopus laevis (African clawed frog) protein is Large ribosomal subunit protein uL24 (rpl26).